Consider the following 288-residue polypeptide: Acetyl-coenzyme A carboxylase carboxyl transferase subunit beta (288 aa).

The CoA carboxyltransferase N-terminal domain occupies L32–V288. Positions 36, 39, 54, and 57 each coordinate Zn(2+). The segment at C36–C57 adopts a C4-type zinc-finger fold.

Belongs to the AccD/PCCB family. Acetyl-CoA carboxylase is a heterohexamer composed of biotin carboxyl carrier protein (AccB), biotin carboxylase (AccC) and two subunits each of ACCase subunit alpha (AccA) and ACCase subunit beta (AccD). Zn(2+) is required as a cofactor.

The protein localises to the cytoplasm. It carries out the reaction N(6)-carboxybiotinyl-L-lysyl-[protein] + acetyl-CoA = N(6)-biotinyl-L-lysyl-[protein] + malonyl-CoA. Its pathway is lipid metabolism; malonyl-CoA biosynthesis; malonyl-CoA from acetyl-CoA: step 1/1. Component of the acetyl coenzyme A carboxylase (ACC) complex. Biotin carboxylase (BC) catalyzes the carboxylation of biotin on its carrier protein (BCCP) and then the CO(2) group is transferred by the transcarboxylase to acetyl-CoA to form malonyl-CoA. The protein is Acetyl-coenzyme A carboxylase carboxyl transferase subunit beta of Lactococcus lactis subsp. cremoris (strain SK11).